A 525-amino-acid polypeptide reads, in one-letter code: MNDLKKSPLLILDFGSQYTQLIARRVREMGVYCEIYPYHINHEQFKKLNPCGVILSGGPSTVTHDANPRAPQWLFESDLPLLGICYGMQTMAVQLGGQVHSSALREFGYAELRLHGHSQLLSNIEDRTAVDGSALLDVWMSHGDKVTELPPGFKVICETRNAPIAGMADESRQMYGLQFHPEVTHTLQGLRILQRFVVDICKAPTEWTPEHIIDEAINKIREQVGTEKVLLGLSGGVDSSVVAALLHRAIGEQLVCVFVDTGLLRLNEAEQVLSMFGRHMGIRIIAVNAEDKFLTALKGVTCPEEKRKIIGRTFIEVFDEEAQKLTDIKWLAQGTIYPDVIESAATSTNDAAVVIKSHHNVGGLPDTLNLKLLEPIRELFKDEVRQVGLELGLPHDMVYRHPFPGPGLGVRILAEVKKEYADILRKADAIFIEELHNAQLYHKISQAFAVFLPVKSVGVMGDGRRYDYVICLRAVETVDFMTAHWSQLPWDFLGKVSNRIINEVEGVSRVTYDISGKPPATIEWE.

The Glutamine amidotransferase type-1 domain occupies 8-206 (PLLILDFGSQ…VVDICKAPTE (199 aa)). The Nucleophile role is filled by Cys85. Catalysis depends on residues His180 and Glu182. Residues 207–400 (WTPEHIIDEA…LGLPHDMVYR (194 aa)) form the GMPS ATP-PPase domain. 234–240 (SGGVDSS) is an ATP binding site.

In terms of assembly, homodimer.

The enzyme catalyses XMP + L-glutamine + ATP + H2O = GMP + L-glutamate + AMP + diphosphate + 2 H(+). It functions in the pathway purine metabolism; GMP biosynthesis; GMP from XMP (L-Gln route): step 1/1. In terms of biological role, catalyzes the synthesis of GMP from XMP. This chain is GMP synthase [glutamine-hydrolyzing], found in Legionella pneumophila (strain Corby).